A 465-amino-acid chain; its full sequence is FAD-dependent oxidoreductase pigF (465 aa).

The signal sequence occupies residues 1 to 17 (MMLLTLLILSSVGLAAA). Residues Asn-95, Asn-138, Asn-260, and Asn-327 are each glycosylated (N-linked (GlcNAc...) asparagine). Residue Asp-444 is the site of GPI-anchor amidated aspartate attachment. Positions 445 to 465 (SASGIWNLTNAVVLPGLLTGL) are cleaved as a propeptide — removed in mature form. Asn-451 carries an N-linked (GlcNAc...) asparagine glycan.

It belongs to the beta-cyclopiazonate dehydrogenase family. FAD serves as cofactor.

Its subcellular location is the cell membrane. It functions in the pathway secondary metabolite biosynthesis. Its function is as follows. FAD-dependent oxidoreductase; part of the gene cluster that mediates the biosynthesis of azaphilone pigments (MonAzPs), a complex mixture of compounds with a common azaphilone skeleton very widely used as food colorants. Within the pathway, pigF desaturates C6(7) to afford the orange and red pigments from yellow pigments. The first step of the pathway is performed by the nrPKS pigA that forms the hexaketide precursor from successive condensations of five malonyl-CoA units, with a simple acetyl-CoA starter unit. The role of esterase pigG is not clear, but it may play at most a supplementary role in the formation of the benzaldehyde produced by the pigA nrPKS. This very reactive benzaldehyde is intercepted by the pigC ketoreductase that to provide the first stable enzyme-free MonAzPs intermediate, 6-(4-hydroxy-2-oxopentyl)-3-methyl-2,4-dioxocyclohexane carbaldehyde, also known as M7PKS-1. The FAD-dependent monooxygenase pigN hydroxylates M7PKS-1 at C-4, which triggers the formation of the pyran ring. PigJ, pigK and pigD are involved in the acetylation of the pyran ring. PigJ and pigK form the two subunits of a dedicated fungal FAS that produces the side chain fatty acyl moiety of MonAzPs and pigD transfers the fatty acyl chain to the C-4 alcohol. PigM and pigO are involved in the elimination of the omega-1 alcohol. PigM acts as an O-acetyltransferase that synthesizes the putative O-11 acetyl intermediate whereas pigO eliminates acetic acid to yield an intermediate with a C10(11) double bond. The dehydration of the C-11 alcohol followed by the reduction of the C6(7) double bond by the NAD(P)H-dependent oxidoreductase pigE increases the electrophilicity of the C-5 ketone of the resulting acyl benzopyran. This in turn sets up the C-5 ketone for an intramolecular Knoevenagel aldol condensation with the C-20 enol of the side chain. This condensation affords the characteristic linear tricyclic carbon skeletons of the yellow pigments that serve as the common precursors for the classical yellow pigments monascin and ankaflavin, orange pigments rubopunctatin and monascorubrin, and red pigments ribropunctamine and monascorubramine. The FAD-dependent oxidoreductase pigF is especially invoved in the biosynthesis of orange and red pigments via desaturation of C6(7). The sequence is that of FAD-dependent oxidoreductase pigF from Monascus ruber (Mold).